A 161-amino-acid polypeptide reads, in one-letter code: Protein-export protein SecB (161 aa).

It belongs to the SecB family. As to quaternary structure, homotetramer, a dimer of dimers. One homotetramer interacts with 1 SecA dimer.

It localises to the cytoplasm. In terms of biological role, one of the proteins required for the normal export of preproteins out of the cell cytoplasm. It is a molecular chaperone that binds to a subset of precursor proteins, maintaining them in a translocation-competent state. It also specifically binds to its receptor SecA. The sequence is that of Protein-export protein SecB from Coxiella burnetii (strain Dugway 5J108-111).